The chain runs to 138 residues: Acidic phospholipase A2 1 (138 aa).

The first 16 residues, 1–16 (MRTLWIMAVLLVGVDG), serve as a signal peptide directing secretion. Cystine bridges form between cysteine 42-cysteine 131, cysteine 44-cysteine 60, cysteine 59-cysteine 110, cysteine 65-cysteine 138, cysteine 66-cysteine 103, cysteine 73-cysteine 97, and cysteine 91-cysteine 101. Ca(2+)-binding residues include tyrosine 43, glycine 45, and glycine 47. The active site involves histidine 63. A Ca(2+)-binding site is contributed by aspartate 64. Aspartate 104 is a catalytic residue.

The protein belongs to the phospholipase A2 family. Group II subfamily. D49 sub-subfamily. In terms of assembly, homodimer. It depends on Ca(2+) as a cofactor. In terms of tissue distribution, expressed by the venom gland.

Its subcellular location is the secreted. It carries out the reaction a 1,2-diacyl-sn-glycero-3-phosphocholine + H2O = a 1-acyl-sn-glycero-3-phosphocholine + a fatty acid + H(+). Its function is as follows. Snake venom phospholipase A2 (PLA2) that is highly lipolytic and myolytic. PLA2 catalyzes the calcium-dependent hydrolysis of the 2-acyl groups in 3-sn-phosphoglycerides. The chain is Acidic phospholipase A2 1 from Protobothrops flavoviridis (Habu).